A 361-amino-acid polypeptide reads, in one-letter code: S-adenosylmethionine decarboxylase proenzyme (361 aa).

Residues Glu13 and Glu16 contribute to the active site. The Schiff-base intermediate with substrate; via pyruvic acid role is filled by Ser73. Residue Ser73 is modified to Pyruvic acid (Ser); by autocatalysis. Cys87 acts as the Proton donor; for catalytic activity in catalysis. Residues Ser236 and His249 each act as proton acceptor; for processing activity in the active site.

Belongs to the eukaryotic AdoMetDC family. It depends on pyruvate as a cofactor. In terms of processing, is synthesized initially as an inactive proenzyme. Formation of the active enzyme involves a self-maturation process in which the active site pyruvoyl group is generated from an internal serine residue via an autocatalytic post-translational modification. Two non-identical subunits are generated from the proenzyme in this reaction, and the pyruvate is formed at the N-terminus of the alpha chain, which is derived from the carboxyl end of the proenzyme. The post-translation cleavage follows an unusual pathway, termed non-hydrolytic serinolysis, in which the side chain hydroxyl group of the serine supplies its oxygen atom to form the C-terminus of the beta chain, while the remainder of the serine residue undergoes an oxidative deamination to produce ammonia and the pyruvoyl group blocking the N-terminus of the alpha chain.

The catalysed reaction is S-adenosyl-L-methionine + H(+) = S-adenosyl 3-(methylsulfanyl)propylamine + CO2. Its pathway is amine and polyamine biosynthesis; S-adenosylmethioninamine biosynthesis; S-adenosylmethioninamine from S-adenosyl-L-methionine: step 1/1. This is S-adenosylmethionine decarboxylase proenzyme (SAMDC) from Nicotiana tabacum (Common tobacco).